The primary structure comprises 363 residues: UDP-3-O-acylglucosamine N-acyltransferase (363 aa).

H266 serves as the catalytic Proton acceptor.

The protein belongs to the transferase hexapeptide repeat family. LpxD subfamily. As to quaternary structure, homotrimer.

It carries out the reaction a UDP-3-O-[(3R)-3-hydroxyacyl]-alpha-D-glucosamine + a (3R)-hydroxyacyl-[ACP] = a UDP-2-N,3-O-bis[(3R)-3-hydroxyacyl]-alpha-D-glucosamine + holo-[ACP] + H(+). Its pathway is bacterial outer membrane biogenesis; LPS lipid A biosynthesis. In terms of biological role, catalyzes the N-acylation of UDP-3-O-acylglucosamine using 3-hydroxyacyl-ACP as the acyl donor. Is involved in the biosynthesis of lipid A, a phosphorylated glycolipid that anchors the lipopolysaccharide to the outer membrane of the cell. The chain is UDP-3-O-acylglucosamine N-acyltransferase from Bordetella pertussis (strain Tohama I / ATCC BAA-589 / NCTC 13251).